The following is a 370-amino-acid chain: Tyrosyl-DNA phosphodiesterase 2 (370 aa).

Met1 is modified (N-acetylmethionine). The tract at residues 1 to 32 is disordered; sequence MASGSSSDAAEPAGPAGRAASAPEAAQAEEDR. Residues 9 to 26 are compositionally biased toward low complexity; the sequence is AAEPAGPAGRAASAPEAA. Lys34 is covalently cross-linked (Glycyl lysine isopeptide (Lys-Gly) (interchain with G-Cter in SUMO2)). Position 99 is a phosphothreonine; by ACVR1B (Thr99). The interval 130–134 is interaction with 5' end of substrate DNA; it reads NIDGL. The Mg(2+) site is built by Asp132 and Glu162. An interaction with 5' end of substrate DNA region spans residues 236-241; that stretch reads HLESTR. Asp272 (proton donor/acceptor) is an active-site residue. Interaction with 5' end of substrate DNA stretches follow at residues 274 to 276 and 315 to 321; these read NLR and LRIPAAY.

Belongs to the CCR4/nocturin family. As to quaternary structure, interacts with TRAF2, TRAF3, TRAF5, TRAF6, TNFRSF8/CD30, TNFRSF5/CD40, TNFRSF1B/TNF-R75, ETS1, ETS2, FLI1, SMAD3 and ACVR1B/ALK4. Mg(2+) is required as a cofactor. The cofactor is Mn(2+). In terms of processing, ubiquitinated by TRAF6. Widely expressed. Expressed in whole brain, cerebellum, quiescent cortical astrocytes and cerebellar granule neurons.

The protein localises to the nucleus. The protein resides in the PML body. Its subcellular location is the nucleolus. It is found in the cytoplasm. DNA repair enzyme that can remove a variety of covalent adducts from DNA through hydrolysis of a 5'-phosphodiester bond, giving rise to DNA with a free 5' phosphate. Catalyzes the hydrolysis of dead-end complexes between DNA and the topoisomerase 2 (TOP2) active site tyrosine residue. The 5'-tyrosyl DNA phosphodiesterase activity can enable the repair of TOP2-induced DNA double-strand breaks/DSBs without the need for nuclease activity, creating a 'clean' DSB with 5'-phosphate termini that are ready for ligation. Thereby, protects the transcription of many genes involved in neurological development and maintenance from the abortive activity of TOP2. Hydrolyzes 5'-phosphoglycolates on protruding 5' ends on DSBs due to DNA damage by radiation and free radicals. Has preference for single-stranded DNA or duplex DNA with a 4 base pair overhang as substrate. Also has 3'-tyrosyl DNA phosphodiesterase activity, but less efficiently and much slower than TDP1. Constitutes the major if not only 5'-tyrosyl-DNA phosphodiesterase in cells. Also acts as an adapter by participating in the specific activation of MAP3K7/TAK1 in response to TGF-beta: associates with components of the TGF-beta receptor-TRAF6-TAK1 signaling module and promotes their ubiquitination dependent complex formation. Involved in non-canonical TGF-beta induced signaling routes. May also act as a negative regulator of ETS1 and may inhibit NF-kappa-B activation. Acts as a regulator of ribosome biogenesis following stress. In Mus musculus (Mouse), this protein is Tyrosyl-DNA phosphodiesterase 2 (Tdp2).